We begin with the raw amino-acid sequence, 341 residues long: L-threonine 3-dehydrogenase (341 aa).

Cys-38 is a Zn(2+) binding site. Active-site charge relay system residues include Thr-40 and His-43. His-63, Glu-64, Cys-93, Cys-96, Cys-99, and Cys-107 together coordinate Zn(2+). NAD(+) contacts are provided by residues Ile-175, Asp-195, Arg-200, Leu-262 to Ile-264, and Ile-286 to Tyr-287.

It belongs to the zinc-containing alcohol dehydrogenase family. In terms of assembly, homotetramer. The cofactor is Zn(2+).

The protein resides in the cytoplasm. It carries out the reaction L-threonine + NAD(+) = (2S)-2-amino-3-oxobutanoate + NADH + H(+). It participates in amino-acid degradation; L-threonine degradation via oxydo-reductase pathway; glycine from L-threonine: step 1/2. In terms of biological role, catalyzes the NAD(+)-dependent oxidation of L-threonine to 2-amino-3-ketobutyrate. In Idiomarina loihiensis (strain ATCC BAA-735 / DSM 15497 / L2-TR), this protein is L-threonine 3-dehydrogenase.